The sequence spans 395 residues: Tryptophan synthase beta chain (395 aa).

N6-(pyridoxal phosphate)lysine is present on Lys-86.

Belongs to the TrpB family. In terms of assembly, tetramer of two alpha and two beta chains. The cofactor is pyridoxal 5'-phosphate.

The enzyme catalyses (1S,2R)-1-C-(indol-3-yl)glycerol 3-phosphate + L-serine = D-glyceraldehyde 3-phosphate + L-tryptophan + H2O. Its pathway is amino-acid biosynthesis; L-tryptophan biosynthesis; L-tryptophan from chorismate: step 5/5. Functionally, the beta subunit is responsible for the synthesis of L-tryptophan from indole and L-serine. In Pseudoalteromonas atlantica (strain T6c / ATCC BAA-1087), this protein is Tryptophan synthase beta chain.